The chain runs to 954 residues: Bifunctional glutamine synthetase adenylyltransferase/adenylyl-removing enzyme (954 aa).

The tract at residues 1–452 (MAVQKDSNKS…HFKATVGGEE (452 aa)) is adenylyl removase. The interval 458 to 954 (EHWTAQLWNV…ILAIYQAILE (497 aa)) is adenylyl transferase.

The protein belongs to the GlnE family. Mg(2+) is required as a cofactor.

It carries out the reaction [glutamine synthetase]-O(4)-(5'-adenylyl)-L-tyrosine + phosphate = [glutamine synthetase]-L-tyrosine + ADP. The catalysed reaction is [glutamine synthetase]-L-tyrosine + ATP = [glutamine synthetase]-O(4)-(5'-adenylyl)-L-tyrosine + diphosphate. Its function is as follows. Involved in the regulation of glutamine synthetase GlnA, a key enzyme in the process to assimilate ammonia. When cellular nitrogen levels are high, the C-terminal adenylyl transferase (AT) inactivates GlnA by covalent transfer of an adenylyl group from ATP to specific tyrosine residue of GlnA, thus reducing its activity. Conversely, when nitrogen levels are low, the N-terminal adenylyl removase (AR) activates GlnA by removing the adenylyl group by phosphorolysis, increasing its activity. The regulatory region of GlnE binds the signal transduction protein PII (GlnB) which indicates the nitrogen status of the cell. The sequence is that of Bifunctional glutamine synthetase adenylyltransferase/adenylyl-removing enzyme from Shewanella oneidensis (strain ATCC 700550 / JCM 31522 / CIP 106686 / LMG 19005 / NCIMB 14063 / MR-1).